A 243-amino-acid polypeptide reads, in one-letter code: MVLTIPTIASVAPVNCELSLDSGRCIKYVATRNSNPKNHVAEELPIMRKNSHQDHHDDWEGVNTICHTIDNIVNVEMETDFFDGKSVLEIGFVTGLPSVYAFENGAEEIAMHTMDKTSLELYCRPTLKRNNIPMIKTKVSCGTIEEAMKFLGGKKFDIILAPDLLNRQEAEFDLVHEILHQGLSYDGICLFSCRTHYANVDGSLTAFLQLVKRRREFEAIERWSSPRTDIIQQKVFQLTRSLF.

This is an uncharacterized protein from Caenorhabditis elegans.